The primary structure comprises 149 residues: MDSVLTNKNPIIYPKRTRRYRTDQSSTDEFSSTNRIRDIKDPEHPELSLEDLNVLTEESVEVDDHKSYVRITFTPTLPHCHLPTHIGLCILVKLVQSLPARFKVDVRVAPGSHDKETTVNKQLGDKERVTAALENPELVALLNKMMQVC.

It belongs to the MIP18 family.

Its function is as follows. May play a role in chromosome segregation through establishment of sister chromatid cohesion. Unable to complement ae7 mutants, and thus probably not involved in the cytosolic iron-sulfur assembly (CIA) pathway. The sequence is that of Protein AE7-like 2 from Arabidopsis thaliana (Mouse-ear cress).